The sequence spans 313 residues: Ribosomal RNA small subunit methyltransferase H (313 aa).

S-adenosyl-L-methionine is bound by residues 31 to 33 (GGH), Asp-51, Phe-77, Asp-95, and Gln-102.

The protein belongs to the methyltransferase superfamily. RsmH family.

It is found in the cytoplasm. It catalyses the reaction cytidine(1402) in 16S rRNA + S-adenosyl-L-methionine = N(4)-methylcytidine(1402) in 16S rRNA + S-adenosyl-L-homocysteine + H(+). In terms of biological role, specifically methylates the N4 position of cytidine in position 1402 (C1402) of 16S rRNA. The sequence is that of Ribosomal RNA small subunit methyltransferase H from Xylella fastidiosa (strain M12).